We begin with the raw amino-acid sequence, 237 residues long: Sugar fermentation stimulation protein homolog (237 aa).

Belongs to the SfsA family.

In Actinobacillus pleuropneumoniae serotype 3 (strain JL03), this protein is Sugar fermentation stimulation protein homolog.